Reading from the N-terminus, the 285-residue chain is Protease HtpX homolog (285 aa).

2 helical membrane-spanning segments follow: residues 7–27 and 30–50; these read TAMLMAAITALFIVIGGMIGG and GMTIALLFALGMNFFSYWFSD. His-131 contributes to the Zn(2+) binding site. Glu-132 is an active-site residue. His-135 contacts Zn(2+). The next 2 helical transmembrane spans lie at 146-166 and 177-197; these read ITATMAGAISALANFAMFFGG and IAGIAVALLAPIAGALIQMAI. Glu-202 is a Zn(2+) binding site.

This sequence belongs to the peptidase M48B family. It depends on Zn(2+) as a cofactor.

The protein localises to the cell inner membrane. The chain is Protease HtpX homolog from Burkholderia cenocepacia (strain HI2424).